Reading from the N-terminus, the 700-residue chain is MDFVRLARLFARARPMGLFILQHLDPCRARWAGGREGLMRPMWAPFSSSSSQLPLGQERQENTGSLGSDPSHSNSTATQEEDEEEEESFGTLSDKYSSRRLFRKSAAQFHNLRFGERRDEQMEPEPKLWRGRRNTPYWYFLQCKHLIKEGKLVEALDLFERQMLKEERLQPMESNYTVLIGGCGRVGYLKKAFNLYNQMKKRDLEPSDATYTALFNVCAESPWKDSALQSALKLRQQLQAKNFELNLKTYHALLKMAAKCADLRMCLDVFKEIIHKGHVVTEETFSFLLMGCIQDKKTGFRYALQVWRLMLSLGLQPSRDSYNLLLVAARDCGLGDPQVASELLLKPREEATVLQPPVSRQRPRRTAQAKAGNLMSAMLHVEALERQLFLEPSQALGPPEPPEARVPGKAQPEVDTKAEPSHTAALTAVALKPPPVELEVNLLTPGAVPPTVVSFGTVTTPADRLALIGGLEGFLSKMAEHRQQPDIRTLTLLAEVVESGSPAESLLLALLDEHQVEADLTFFNTLVRKKSKLGDLEGAKALLPVLAKRGLVPNLQTFCNLAIGCHRPKDGLQLLTDMKKSQVTPNTHIYSALINAAIRKLNYTYLISILKDMKQNRVPVNEVVIRQLEFAAQYPPTFDRYQGKNTYLEKIDGFRAYYKQWLTVMPAEETPHPWQKFRTKPQGDQDTGKEADDGCALGGR.

Positions 49–93 (SSSQLPLGQERQENTGSLGSDPSHSNSTATQEEDEEEEESFGTLS) are disordered. Residues 62-78 (NTGSLGSDPSHSNSTAT) show a composition bias toward polar residues. Residues 79–88 (QEEDEEEEES) show a composition bias toward acidic residues. PPR repeat units follow at residues 135–171 (TPYW…RLQP), 172–206 (MESN…DLEP), 207–245 (SDAT…NFEL), 246–280 (NLKT…GHVV), 281–317 (TEET…GLQP), and 318–354 (SRDS…ATVL). The interval 393-414 (SQALGPPEPPEARVPGKAQPEV) is disordered. PPR repeat units lie at residues 519–553 (DLTF…GLVP), 554–585 (NLQT…QVTP), and 586–620 (NTHI…RVPV). A disordered region spans residues 672–700 (HPWQKFRTKPQGDQDTGKEADDGCALGGR). The span at 681–692 (PQGDQDTGKEAD) shows a compositional bias: basic and acidic residues.

The protein belongs to the PTCD1 family. As to quaternary structure, associates with mitochondrial leucine tRNAs. Interacts with ELAC2. Abundant in testes, skeletal muscle and heart.

The protein resides in the mitochondrion. It is found in the mitochondrion matrix. In terms of biological role, mitochondrial protein implicated in negative regulation of leucine tRNA levels, as well as negative regulation of mitochondria-encoded proteins and COX activity. Also affects the 3'-processing of mitochondrial tRNAs. The sequence is that of Pentatricopeptide repeat-containing protein 1, mitochondrial (PTCD1) from Homo sapiens (Human).